Here is a 1453-residue protein sequence, read N- to C-terminus: Clustered mitochondria protein homolog (1453 aa).

The span at 78–101 (LSENGQENSPHNSDSGHETSSPDS) shows a compositional bias: polar residues. The disordered stretch occupies residues 78-110 (LSENGQENSPHNSDSGHETSSPDSPLTPIEEGA). One can recognise a Clu domain in the interval 439–690 (EDGIRAEDCT…RTFPPDVNYL (252 aa)). The segment at 979–1015 (PLTPSNEEVSMPINSVKKSRSSKRRKQISSGGKENDD) is disordered. A compositionally biased stretch (basic residues) spans 995–1005 (KKSRSSKRRKQ). TPR repeat units lie at residues 1235–1268 (AEID…HQIY) and 1277–1310 (ALIY…YSKT).

It belongs to the CLU family.

Its subcellular location is the cytoplasm. In terms of biological role, mRNA-binding protein involved in proper cytoplasmic distribution of mitochondria. This chain is Clustered mitochondria protein homolog, found in Brugia malayi (Filarial nematode worm).